The following is a 165-amino-acid chain: uncharacterized protein (165 aa).

Residues 7-29 (YPLIFTAFLLIAFCLIFFSYHLI) form a helical membrane-spanning segment.

It localises to the membrane. This is an uncharacterized protein from Bacillus subtilis (strain 168).